The following is a 415-amino-acid chain: Zona pellucida-like domain-containing protein 1 (415 aa).

An N-terminal signal peptide occupies residues 1 to 19 (MEQIWLLLLLTIRVLPGSA). Over 20–372 (QFNGYNCDAN…PPFQLNAITS (353 aa)) the chain is Extracellular. One can recognise a ZP domain in the interval 43–320 (YCGVQAITMK…PICSHRERRD (278 aa)). Cystine bridges form between Cys-44–Cys-155 and Cys-79–Cys-104. N-linked (GlcNAc...) asparagine glycans are attached at residues Asn-121 and Asn-164. 2 cysteine pairs are disulfide-bonded: Cys-235–Cys-296 and Cys-255–Cys-313. Positions 323–360 (RRTTWSPQSSSGSAVLSAGPIITRSDETPTNNSQLGSP) are disordered. Polar residues-rich tracts occupy residues 325–336 (TTWSPQSSSGSA) and 350–359 (TPTNNSQLGS). A helical transmembrane segment spans residues 373–393 (ALISGMVILGVTSFSLLLCSL). Over 394–415 (ALLHRKGPTSLVLNGIRNPVFD) the chain is Cytoplasmic.

Proteolytically cleaved before the transmembrane segment to yield the secreted form found in the extracellular matrix of the cupula. As to expression, detected in placenta, kidney, lung, pancreas and at very low level in other tissues.

It is found in the cytoplasmic vesicle membrane. It localises to the secreted. The protein localises to the extracellular space. The protein resides in the extracellular matrix. Glycoprotein which is a component of the gelatinous extracellular matrix in the cupulae of the vestibular organ. The protein is Zona pellucida-like domain-containing protein 1 (ZPLD1) of Homo sapiens (Human).